The sequence spans 239 residues: Ribonuclease 3 (239 aa).

The RNase III domain maps to 12–137 (RAKLEALIGH…LIAAIYLDGG (126 aa)). Glutamate 50 is a Mg(2+) binding site. Residue aspartate 54 is part of the active site. Residues aspartate 123 and glutamate 126 each coordinate Mg(2+). Glutamate 126 is a catalytic residue. In terms of domain architecture, DRBM spans 162–231 (DAKTELQEWS…ATKMLEREGI (70 aa)).

Belongs to the ribonuclease III family. As to quaternary structure, homodimer. Mg(2+) serves as cofactor.

Its subcellular location is the cytoplasm. It catalyses the reaction Endonucleolytic cleavage to 5'-phosphomonoester.. Functionally, digests double-stranded RNA. Involved in the processing of primary rRNA transcript to yield the immediate precursors to the large and small rRNAs (23S and 16S). Processes some mRNAs, and tRNAs when they are encoded in the rRNA operon. Processes pre-crRNA and tracrRNA of type II CRISPR loci if present in the organism. The protein is Ribonuclease 3 of Rhizobium etli (strain ATCC 51251 / DSM 11541 / JCM 21823 / NBRC 15573 / CFN 42).